The primary structure comprises 190 residues: Dynein axonemal light chain 1 (190 aa).

The residue at position 2 (alanine 2) is an N-acetylalanine. 4 LRR repeats span residues 49 to 70 (NCEKLSLSTNCIEKIANLNGLK), 71 to 92 (NLRILSLGRNNIKNLNGLEAVG), 94 to 115 (TLEELWISYNFIEKLKGIHIMK), and 116 to 137 (KLKILYMSNNLVKDWAEFVKLA). At serine 56 the chain carries Phosphoserine. The 41-residue stretch at 150-190 (NPLEEKHSAENNWIEEATKRVPKLKKLDGTPVIKGDEEEDN) folds into the LRRCT domain.

This sequence belongs to the dynein light chain LC1-type family. Interacts with ZMYND10 (via C-terminus). Interacts with DNAH5, a outer arm dynein heavy chain. Interacts with tubulin located within the A-tubule of the outer doublets in a ATP-independent manner. Expressed in tissues carrying motile cilia such as respiratory epithelia, ependyma and testis.

It localises to the cytoplasm. It is found in the cytoskeleton. Its subcellular location is the cilium axoneme. In terms of biological role, part of the multisubunit axonemal ATPase complexes that generate the force for cilia motility and govern beat frequency. Component of the outer arm dynein (ODA). May be involved in a mechanosensory feedback mechanism controlling ODA activity based on external conformational cues by tethering the outer arm dynein heavy chain (DNAH5) to the microtubule within the axoneme. Important for ciliary function in the airways and for the function of the cilia that produce the nodal flow essential for the determination of the left-right asymmetry. In Homo sapiens (Human), this protein is Dynein axonemal light chain 1.